A 287-amino-acid polypeptide reads, in one-letter code: Coatomer subunit epsilon-1 (287 aa).

The protein belongs to the COPE family. In terms of assembly, oligomeric complex that consists of at least the alpha, beta, beta', gamma, delta, epsilon and zeta subunits.

It localises to the cytoplasm. It is found in the golgi apparatus membrane. The protein localises to the cytoplasmic vesicle. The protein resides in the COPI-coated vesicle membrane. The coatomer is a cytosolic protein complex that binds to dilysine motifs and reversibly associates with Golgi non-clathrin-coated vesicles, which further mediate biosynthetic protein transport from the ER, via the Golgi up to the trans Golgi network. The coatomer complex is required for budding from Golgi membranes, and is essential for the retrograde Golgi-to-ER transport of dilysine-tagged proteins. This is Coatomer subunit epsilon-1 (COPE1) from Oryza sativa subsp. japonica (Rice).